A 317-amino-acid polypeptide reads, in one-letter code: Ferrochelatase (317 aa).

Fe cation-binding residues include His-192 and Glu-271.

The protein belongs to the ferrochelatase family.

The protein localises to the cytoplasm. It catalyses the reaction heme b + 2 H(+) = protoporphyrin IX + Fe(2+). It functions in the pathway porphyrin-containing compound metabolism; protoheme biosynthesis; protoheme from protoporphyrin-IX: step 1/1. Catalyzes the ferrous insertion into protoporphyrin IX. The sequence is that of Ferrochelatase from Geobacter metallireducens (strain ATCC 53774 / DSM 7210 / GS-15).